The following is a 395-amino-acid chain: Altered inheritance of mitochondria protein 39, mitochondrial (395 aa).

A helical transmembrane segment spans residues 161 to 181; it reads IFGGIFGVIIGYSLIYKVIYL.

It belongs to the AIM39 family.

It localises to the mitochondrion membrane. The sequence is that of Altered inheritance of mitochondria protein 39, mitochondrial (AIM39) from Saccharomyces cerevisiae (strain YJM789) (Baker's yeast).